We begin with the raw amino-acid sequence, 530 residues long: Lanosterol 14-alpha demethylase CYP51 (530 aa).

The Lumenal portion of the chain corresponds to M1–S20. The helical transmembrane segment at H21 to Y41 threads the bilayer. Topologically, residues N42–I530 are cytoplasmic. K116 participates in a covalent cross-link: Glycyl lysine isopeptide (Lys-Gly) (interchain with G-Cter in ubiquitin). Y126 is a binding site for lanosterol. Residue G314 coordinates itraconazole. Residues K353 and K454 each participate in a glycyl lysine isopeptide (Lys-Gly) (interchain with G-Cter in ubiquitin) cross-link. S458 bears the Phosphoserine mark. Position 470 (C470) interacts with heme.

The protein belongs to the cytochrome P450 family. Interacts with ERG28. Heme serves as cofactor.

The protein resides in the endoplasmic reticulum membrane. The enzyme catalyses a 14alpha-methyl steroid + 3 reduced [NADPH--hemoprotein reductase] + 3 O2 = a Delta(14) steroid + formate + 3 oxidized [NADPH--hemoprotein reductase] + 4 H2O + 4 H(+). It catalyses the reaction a 14alpha-methyl steroid + reduced [NADPH--hemoprotein reductase] + O2 = a 14alpha-hydroxymethyl steroid + oxidized [NADPH--hemoprotein reductase] + H2O + H(+). The catalysed reaction is a 14alpha-hydroxymethyl steroid + reduced [NADPH--hemoprotein reductase] + O2 = a 14alpha-formyl steroid + oxidized [NADPH--hemoprotein reductase] + 2 H2O + H(+). It carries out the reaction a 14alpha-formyl steroid + reduced [NADPH--hemoprotein reductase] + O2 = a Delta(14) steroid + formate + oxidized [NADPH--hemoprotein reductase] + H2O + 2 H(+). The enzyme catalyses lanosterol + 3 reduced [NADPH--hemoprotein reductase] + 3 O2 = 4,4-dimethyl-5alpha-cholesta-8,14,24-trien-3beta-ol + formate + 3 oxidized [NADPH--hemoprotein reductase] + 4 H2O + 4 H(+). It catalyses the reaction lanosterol + reduced [NADPH--hemoprotein reductase] + O2 = 32-hydroxylanosterol + oxidized [NADPH--hemoprotein reductase] + H2O + H(+). The catalysed reaction is 32-hydroxylanosterol + reduced [NADPH--hemoprotein reductase] + O2 = 32-oxolanosterol + oxidized [NADPH--hemoprotein reductase] + 2 H2O + H(+). It carries out the reaction 32-oxolanosterol + reduced [NADPH--hemoprotein reductase] + O2 = 4,4-dimethyl-5alpha-cholesta-8,14,24-trien-3beta-ol + formate + oxidized [NADPH--hemoprotein reductase] + H2O + 2 H(+). Its pathway is steroid biosynthesis; zymosterol biosynthesis; zymosterol from lanosterol: step 1/6. Its function is as follows. Sterol 14alpha-demethylase that plays a critical role in the third module of ergosterol biosynthesis pathway, being ergosterol the major sterol component in fungal membranes that participates in a variety of functions. The third module or late pathway involves the ergosterol synthesis itself through consecutive reactions that mainly occur in the endoplasmic reticulum (ER) membrane. Starting from lanosterol (lanosta-8,24-dien-3beta-ol), it catalyzes the three-step oxidative removal of the 14alpha-methyl group (C-32) of the sterol in the form of formate, and converts the sterol to 4,4-dimethyl-5alpha-cholesta-8,14,24-trien-3beta-ol, which is critical for ergosterol biosynthesis. Can demethylate substrates not intrinsic to yeast, such as eburicol (24-methylene-24,25-dihydrolanosterol) at a similar rate to lanosterol, and at a lower rate the 24,25-dihydrolanosterol (DHL) to 4,4-dimethyl-8,14-cholestadien-3beta-ol. This is Lanosterol 14-alpha demethylase CYP51 from Saccharomyces cerevisiae (strain ATCC 204508 / S288c) (Baker's yeast).